The chain runs to 543 residues: Protein DETOXIFICATION 47, chloroplastic (543 aa).

Residues 1 to 30 constitute a chloroplast transit peptide; the sequence is MLIKSQRLTLFSPLLSKTRRIPVNSHQTLV. Residues 55–94 are a coiled coil; the sequence is VIRRRIKLERVTRNCVRIDREIDEEEEEEEKERGDLVKQS. 12 helical membrane-spanning segments follow: residues 107-127, 135-155, 181-201, 228-248, 256-276, 278-298, 319-339, 342-362, 406-426, 443-463, 472-492, and 497-517; these read GPAM…TVVI, LAAL…FMFL, VLLF…RLFG, GLAW…LGMK, ALAA…LFLG, GIAG…YMMM, LWKI…KIAF, FIIY…QVMA, IIGA…PGLF, LLIP…LEGT, FVSS…MFVT, and GLLG…GLYL.

This sequence belongs to the multi antimicrobial extrusion (MATE) (TC 2.A.66.1) family. In terms of tissue distribution, preferentially expressed in the epidermal cells.

It is found in the plastid. Its subcellular location is the chloroplast membrane. Functions as a multidrug and toxin extrusion transporter in the export of salicylic acid (SA) from the chloroplast to the cytoplasm. Plays an essential function in plant defense via the pathogen-induced salicylic acid (SA) accumulation. Also acts as a key component of the Age-related resistance (ARR) pathway. The polypeptide is Protein DETOXIFICATION 47, chloroplastic (Arabidopsis thaliana (Mouse-ear cress)).